A 577-amino-acid polypeptide reads, in one-letter code: Arginine--tRNA ligase (577 aa).

The 'HIGH' region motif lies at 122–132 (PNVAKEMHVGH).

The protein belongs to the class-I aminoacyl-tRNA synthetase family. Monomer.

Its subcellular location is the cytoplasm. It catalyses the reaction tRNA(Arg) + L-arginine + ATP = L-arginyl-tRNA(Arg) + AMP + diphosphate. This is Arginine--tRNA ligase from Salmonella schwarzengrund (strain CVM19633).